A 202-amino-acid polypeptide reads, in one-letter code: Nucleoside triphosphate pyrophosphatase (202 aa).

Asp-79 (proton acceptor) is an active-site residue.

This sequence belongs to the Maf family. The cofactor is a divalent metal cation.

The protein localises to the cytoplasm. The enzyme catalyses a ribonucleoside 5'-triphosphate + H2O = a ribonucleoside 5'-phosphate + diphosphate + H(+). The catalysed reaction is a 2'-deoxyribonucleoside 5'-triphosphate + H2O = a 2'-deoxyribonucleoside 5'-phosphate + diphosphate + H(+). Its function is as follows. Nucleoside triphosphate pyrophosphatase. May have a dual role in cell division arrest and in preventing the incorporation of modified nucleotides into cellular nucleic acids. The sequence is that of Nucleoside triphosphate pyrophosphatase from Rhodopseudomonas palustris (strain BisB5).